The chain runs to 691 residues: Histone-lysine N-methyltransferase Set8 (691 aa).

The disordered stretch occupies residues 1 to 29 (MIMVRRRQRPAKEAASSSSGGASSGSGIP). Residues 14–27 (AASSSSGGASSGSG) show a composition bias toward low complexity. A phosphoserine mark is found at Ser195 and Ser250. At Thr252 the chain carries Phosphothreonine. Ser281 carries the phosphoserine modification. Disordered stretches follow at residues 341-363 (TANT…HRIL), 382-401 (GSAD…TTTA), 407-437 (KSRR…QQQQ), and 464-516 (AEER…ATNG). The residue at position 344 (Thr344) is a Phosphothreonine. Ser346, Ser383, Ser388, and Ser392 each carry phosphoserine. Polar residues-rich tracts occupy residues 421 to 430 (YQPQLQKPPS) and 471 to 481 (NKAPATANSNK). Positions 555–676 (DGLQVRHFMG…PGEELTYDYG (122 aa)) constitute an SET domain. Residues 565–567 (KGR), Tyr610, and 637–638 (NH) contribute to the S-adenosyl-L-methionine site.

Belongs to the class V-like SAM-binding methyltransferase superfamily. Histone-lysine methyltransferase family. PR/SET subfamily.

It is found in the nucleus. Its subcellular location is the chromosome. It carries out the reaction L-lysyl(20)-[histone H4] + S-adenosyl-L-methionine = N(6)-methyl-L-lysyl(20)-[histone H4] + S-adenosyl-L-homocysteine + H(+). Functionally, histone methyltransferase that specifically monomethylates 'Lys-20' of histone H4. H4 'Lys-20' monomethylation is enriched during mitosis and represents a specific tag for epigenetic transcriptional repression. Mainly functions in euchromatin regions, thereby playing a central role in the silencing of euchromatic genes. Required for cell proliferation, possibly by contributing to the maintenance of proper higher-order structure of DNA and chromosome condensation during mitosis. In Drosophila melanogaster (Fruit fly), this protein is Histone-lysine N-methyltransferase Set8.